We begin with the raw amino-acid sequence, 645 residues long: 1-deoxy-D-xylulose-5-phosphate synthase (645 aa).

Thiamine diphosphate-binding positions include histidine 87 and 128 to 130 (GHS). Residue aspartate 159 participates in Mg(2+) binding. Thiamine diphosphate contacts are provided by residues 160–161 (GA), asparagine 188, phenylalanine 295, and glutamate 384. A Mg(2+)-binding site is contributed by asparagine 188.

This sequence belongs to the transketolase family. DXPS subfamily. Homodimer. Requires Mg(2+) as cofactor. Thiamine diphosphate is required as a cofactor.

The catalysed reaction is D-glyceraldehyde 3-phosphate + pyruvate + H(+) = 1-deoxy-D-xylulose 5-phosphate + CO2. It participates in metabolic intermediate biosynthesis; 1-deoxy-D-xylulose 5-phosphate biosynthesis; 1-deoxy-D-xylulose 5-phosphate from D-glyceraldehyde 3-phosphate and pyruvate: step 1/1. Functionally, catalyzes the acyloin condensation reaction between C atoms 2 and 3 of pyruvate and glyceraldehyde 3-phosphate to yield 1-deoxy-D-xylulose-5-phosphate (DXP). This is 1-deoxy-D-xylulose-5-phosphate synthase from Alcanivorax borkumensis (strain ATCC 700651 / DSM 11573 / NCIMB 13689 / SK2).